Here is a 189-residue protein sequence, read N- to C-terminus: Glycerol-3-phosphate acyltransferase (189 aa).

The next 5 helical transmembrane spans lie at 1 to 21, 50 to 70, 77 to 97, 111 to 131, and 151 to 171; these read MFWL…AIVL, KLAI…VLLA, LHAQ…PLYF, MLMG…LLTF, and LLAW…VMIV.

Belongs to the PlsY family. Probably interacts with PlsX.

The protein localises to the cell inner membrane. It carries out the reaction an acyl phosphate + sn-glycerol 3-phosphate = a 1-acyl-sn-glycero-3-phosphate + phosphate. The protein operates within lipid metabolism; phospholipid metabolism. In terms of biological role, catalyzes the transfer of an acyl group from acyl-phosphate (acyl-PO(4)) to glycerol-3-phosphate (G3P) to form lysophosphatidic acid (LPA). This enzyme utilizes acyl-phosphate as fatty acyl donor, but not acyl-CoA or acyl-ACP. In Pseudomonas putida (strain ATCC 700007 / DSM 6899 / JCM 31910 / BCRC 17059 / LMG 24140 / F1), this protein is Glycerol-3-phosphate acyltransferase.